Reading from the N-terminus, the 295-residue chain is ATP synthase gamma chain (295 aa).

It belongs to the ATPase gamma chain family. As to quaternary structure, F-type ATPases have 2 components, CF(1) - the catalytic core - and CF(0) - the membrane proton channel. CF(1) has five subunits: alpha(3), beta(3), gamma(1), delta(1), epsilon(1). CF(0) has three main subunits: a, b and c.

It localises to the cell inner membrane. Functionally, produces ATP from ADP in the presence of a proton gradient across the membrane. The gamma chain is believed to be important in regulating ATPase activity and the flow of protons through the CF(0) complex. This is ATP synthase gamma chain from Maricaulis maris (strain MCS10) (Caulobacter maris).